Reading from the N-terminus, the 275-residue chain is Lectin (275 aa).

Positions 1 to 30 (MASLQTQMISFYAIFLSILLTTILFFKVNS) are cleaved as a signal peptide. Positions 149 and 151 each coordinate Mn(2+). Ca(2+) is bound by residues Asp151, Phe153, Asn155, and Asp159. Residues Asp159 and His166 each coordinate Mn(2+). Asn217 carries an N-linked (GlcNAc...) asparagine glycan.

It belongs to the leguminous lectin family. As to quaternary structure, tetramer of two alpha and two beta chains.

Functionally, D-mannose specific lectin. This is Lectin (LECA) from Pisum sativum (Garden pea).